The primary structure comprises 141 residues: 3-hydroxyacyl-[acyl-carrier-protein] dehydratase FabZ (141 aa).

Histidine 48 is an active-site residue.

It belongs to the thioester dehydratase family. FabZ subfamily.

It is found in the cytoplasm. The enzyme catalyses a (3R)-hydroxyacyl-[ACP] = a (2E)-enoyl-[ACP] + H2O. Functionally, involved in unsaturated fatty acids biosynthesis. Catalyzes the dehydration of short chain beta-hydroxyacyl-ACPs and long chain saturated and unsaturated beta-hydroxyacyl-ACPs. The chain is 3-hydroxyacyl-[acyl-carrier-protein] dehydratase FabZ from Herpetosiphon aurantiacus (strain ATCC 23779 / DSM 785 / 114-95).